The primary structure comprises 271 residues: Mannosyl-3-phosphoglycerate phosphatase (271 aa).

The active-site Nucleophile is the Asp-13. Residues Asp-13, Asp-15, and Asp-214 each contribute to the Mg(2+) site.

This sequence belongs to the HAD-like hydrolase superfamily. MPGP family. The cofactor is Mg(2+).

It localises to the cytoplasm. It catalyses the reaction 2-O-(alpha-D-mannosyl)-3-phosphoglycerate + H2O = (2R)-2-O-(alpha-D-mannosyl)-glycerate + phosphate. The polypeptide is Mannosyl-3-phosphoglycerate phosphatase (Escherichia coli (strain K12 / DH10B)).